Consider the following 445-residue polypeptide: UPF0210 protein SPG_0223 (445 aa).

The protein belongs to the UPF0210 family. In terms of assembly, homodimer.

The chain is UPF0210 protein SPG_0223 from Streptococcus pneumoniae serotype 19F (strain G54).